We begin with the raw amino-acid sequence, 344 residues long: Protein pelota homolog (344 aa).

Belongs to the eukaryotic release factor 1 family. Pelota subfamily. As to quaternary structure, monomer. The cofactor is a divalent metal cation.

It localises to the cytoplasm. Its function is as follows. May function in recognizing stalled ribosomes, interact with stem-loop structures in stalled mRNA molecules, and effect endonucleolytic cleavage of the mRNA. May play a role in the release non-functional ribosomes and degradation of damaged mRNAs. Has endoribonuclease activity. The chain is Protein pelota homolog from Saccharolobus islandicus (strain M.16.27) (Sulfolobus islandicus).